The primary structure comprises 300 residues: Probable malate dehydrogenase (300 aa).

An NAD(+)-binding site is contributed by 6–12 (IGAGNVG). Residues Arg81 and Arg87 each coordinate substrate. NAD(+) is bound by residues Asn94 and 117-119 (LTN). Substrate is bound by residues Asn119 and Arg150. His174 functions as the Proton acceptor in the catalytic mechanism.

The protein belongs to the LDH/MDH superfamily.

The enzyme catalyses (S)-malate + NAD(+) = oxaloacetate + NADH + H(+). Its function is as follows. Catalyzes the reversible oxidation of malate to oxaloacetate. The protein is Probable malate dehydrogenase (mdh) of Campylobacter jejuni subsp. jejuni serotype O:2 (strain ATCC 700819 / NCTC 11168).